A 2158-amino-acid chain; its full sequence is Non-reducing polyketide synthase Preu8 (2158 aa).

Residues 4–241 are N-terminal acylcarrier protein transacylase domain (SAT); the sequence is LVLGDQVADH…TPIPVFAPYH (238 aa). The Ketosynthase family 3 (KS3) domain maps to 369 to 801; it reads NDKIAIVGMS…GGNTAIILED (433 aa). Active-site for beta-ketoacyl synthase activity residues include Cys-541, His-676, and His-719. A malonyl-CoA:ACP transacylase (MAT) domain region spans residues 900–1215; that stretch reads FTFTGQGSQY…ANSVSTLFLA (316 aa). Ser-989 acts as the For acyl/malonyl transferase activity in catalysis. The segment at 1285-1603 is product template (PT) domain; sequence SCQRIVREEL…RRVLNIMMPP (319 aa). Residues 1287 to 1423 are N-terminal hotdog fold; that stretch reads QRIVREELHA…GTVKYEDVSQ (137 aa). The region spanning 1287 to 1598 is the PKS/mFAS DH domain; it reads QRIVREELHA…FQNIARRVLN (312 aa). His-1319 acts as the Proton acceptor; for dehydratase activity in catalysis. The segment at 1451–1598 is C-terminal hotdog fold; that stretch reads AHKVLRGMAY…FQNIARRVLN (148 aa). The active-site Proton donor; for dehydratase activity is Asp-1511. Residues 1619–1639 show a composition bias toward low complexity; that stretch reads KKAASPTLAPAKAAKPAAKTS. Positions 1619 to 1654 are disordered; it reads KKAASPTLAPAKAAKPAAKTSKPSKARAKPAADSTT. In terms of domain architecture, Carrier 1 spans 1651-1725; that stretch reads DSTTSRVMKI…QMKKFFSQYD (75 aa). Ser-1685 is modified (O-(pantetheine 4'-phosphoryl)serine). A disordered region spans residues 1723–1779; it reads QYDGAPIPDDGDDSDGTDEPSNFSTPSYGADNASTPPSSAPSVNGKSSPENHEVLES. Residues 1731–1740 are compositionally biased toward acidic residues; sequence DDGDDSDGTD. A compositionally biased stretch (polar residues) spans 1743-1770; that stretch reads SNFSTPSYGADNASTPPSSAPSVNGKSS. The Carrier 2 domain maps to 1779 to 1853; it reads STEVSLARKI…DIENELGMRP (75 aa). Ser-1813 bears the O-(pantetheine 4'-phosphoryl)serine mark. The interval 1847 to 1879 is disordered; sequence NELGMRPKPKPKAEAAPPKSSAKASPSANKQPQ. The span at 1860-1876 shows a compositional bias: low complexity; that stretch reads EAAPPKSSAKASPSANK. Residues 1894 to 2144 are thioesterase (TE) domain; the sequence is SQYPPANSVL…NHFTMMKGDH (251 aa).

Requires pantetheine 4'-phosphate as cofactor.

Functionally, non-reducing polyketide synthase; part of a gene cluster that mediates the biosynthesis of a yet unidentified natural product. This is Non-reducing polyketide synthase Preu8 from Preussia isomera (Coprophilous fungus).